A 106-amino-acid chain; its full sequence is UPF0145 protein BH0643 (106 aa).

The protein belongs to the UPF0145 family.

The chain is UPF0145 protein BH0643 from Halalkalibacterium halodurans (strain ATCC BAA-125 / DSM 18197 / FERM 7344 / JCM 9153 / C-125) (Bacillus halodurans).